The following is a 331-amino-acid chain: Phosphoribosylformylglycinamidine cyclo-ligase (331 aa).

The protein belongs to the AIR synthase family.

It localises to the cytoplasm. It carries out the reaction 2-formamido-N(1)-(5-O-phospho-beta-D-ribosyl)acetamidine + ATP = 5-amino-1-(5-phospho-beta-D-ribosyl)imidazole + ADP + phosphate + H(+). The protein operates within purine metabolism; IMP biosynthesis via de novo pathway; 5-amino-1-(5-phospho-D-ribosyl)imidazole from N(2)-formyl-N(1)-(5-phospho-D-ribosyl)glycinamide: step 2/2. The protein is Phosphoribosylformylglycinamidine cyclo-ligase of Clostridium botulinum (strain Loch Maree / Type A3).